Reading from the N-terminus, the 306-residue chain is Nucleotide-binding protein RSal33209_2275 (306 aa).

29-36 (GMSGAGRS) contributes to the ATP binding site. 80-83 (DVRG) is a GTP binding site.

The protein belongs to the RapZ-like family.

Its function is as follows. Displays ATPase and GTPase activities. The chain is Nucleotide-binding protein RSal33209_2275 from Renibacterium salmoninarum (strain ATCC 33209 / DSM 20767 / JCM 11484 / NBRC 15589 / NCIMB 2235).